A 75-amino-acid chain; its full sequence is uncharacterized protein (75 aa).

The signal sequence occupies residues 1–19 (MKKTAAIISACMLTFALSA). Residue Cys20 is the site of N-palmitoyl cysteine attachment. Cys20 carries S-diacylglycerol cysteine lipidation.

To E.coli YgdR.

Its subcellular location is the cell membrane. This is an uncharacterized protein from Escherichia coli O6:H1 (strain CFT073 / ATCC 700928 / UPEC).